Here is a 475-residue protein sequence, read N- to C-terminus: Maintenance of mitochondrial morphology protein 1 (475 aa).

Residues 1 to 14 (MSETFSPNLTFTEG) lie on the Lumenal side of the membrane. The chain crosses the membrane as a helical span at residues 15–35 (FVLGQASFLIILLLFIRYVVF). Topologically, residues 36 to 475 (SPSEQIDHEG…VTPGQVGTSR (440 aa)) are cytoplasmic. In terms of domain architecture, SMP-LTD spans 80 to 278 (PAESSDWVNV…HPNHISLALP (199 aa)). Disordered regions lie at residues 321-381 (NPVE…GQPQ) and 394-475 (SYPH…GTSR). The segment covering 341–351 (PPTPLVQPPGT) has biased composition (pro residues). Polar residues-rich tracts occupy residues 353 to 380 (PTLS…QGQP) and 394 to 403 (SYPHYNTYTL). Positions 442-464 (STTSSLTPSQSQSQFRFRGQFAS) are enriched in low complexity.

The protein belongs to the MMM1 family. In terms of assembly, homodimer. Component of the ER-mitochondria encounter structure (ERMES) or MDM complex, composed of MMM1, MDM10, MDM12 and MDM34. An MMM1 homodimer associates with one molecule of MDM12 on each side in a pairwise head-to-tail manner, and the SMP-LTD domains of MMM1 and MDM12 generate a continuous hydrophobic tunnel for phospholipid trafficking.

The protein localises to the endoplasmic reticulum membrane. Its function is as follows. Component of the ERMES/MDM complex, which serves as a molecular tether to connect the endoplasmic reticulum (ER) and mitochondria. Components of this complex are involved in the control of mitochondrial shape and protein biogenesis, and function in nonvesicular lipid trafficking between the ER and mitochondria. The MDM12-MMM1 subcomplex functions in the major beta-barrel assembly pathway that is responsible for biogenesis of all outer membrane beta-barrel proteins, and acts in a late step after the SAM complex. The MDM10-MDM12-MMM1 subcomplex further acts in the TOM40-specific pathway after the action of the MDM12-MMM1 complex. Essential for establishing and maintaining the structure of mitochondria and maintenance of mtDNA nucleoids. The protein is Maintenance of mitochondrial morphology protein 1 of Cryptococcus neoformans var. neoformans serotype D (strain B-3501A) (Filobasidiella neoformans).